A 358-amino-acid chain; its full sequence is CD209 antigen (358 aa).

The Cytoplasmic segment spans residues 1 to 37; the sequence is MSDSKEPRLQQLGLLEEEQLRGVGFRQTRGYKSLAGC. 3 consecutive short sequence motifs (endocytosis signal) follow at residues 14-15, 16-18, and 31-34; these read LL, EEE, and YKSL. Residues 38–58 traverse the membrane as a helical; Signal-anchor for type II membrane protein segment; sequence LGHGPLVLQLLSFTLLAGLLV. At 59-358 the chain is on the extracellular side; it reads QVSKVPSSLS…APTTPNPPPE (300 aa). Asparagine 80 carries an N-linked (GlcNAc...) asparagine glycan. Tandem repeats lie at residues 96 to 118, 119 to 141, 142 to 164, 165 to 187, and 188 to 211. Positions 96–280 are 5 X approximate tandem repeats; that stretch reads KLQEIYQELT…GLSDLNHEGT (185 aa). Intrachain disulfides connect cysteine 210-cysteine 221, cysteine 238-cysteine 331, and cysteine 310-cysteine 323. Residues 217–332 form the C-type lectin domain; the sequence is FQGNCYFMSN…CNLAKFWICK (116 aa). Residues glutamate 301, asparagine 303, isoleucine 305, glutamate 308, asparagine 319, and aspartate 320 each coordinate Ca(2+). The disordered stretch occupies residues 336–358; that stretch reads ASCSGDEERLLSPAPTTPNPPPE.

In terms of assembly, homotetramer. Interacts with C1QBP; the interaction is indicative for a C1q:C1QBP:CD209 signaling complex. Interacts with ICAM2 and ICAM3 by binding to mannose-like carbohydrates. Interacts (via C-type lectin domain) with CEACAM1 (via Lewis X moieties); this interaction is regulated by the glycosylation pattern of CEACAM1 on cell types and regulates contact between dendritic cells and neutrophils.

It localises to the membrane. In terms of biological role, pathogen-recognition receptor expressed on the surface of immature dendritic cells (DCs) and involved in initiation of primary immune response. Thought to mediate the endocytosis of pathogens which are subsequently degraded in lysosomal compartments. The receptor returns to the cell membrane surface and the pathogen-derived antigens are presented to resting T-cells via MHC class II proteins to initiate the adaptive immune response. Probably recognizes in a calcium-dependent manner high mannose N-linked oligosaccharides in a variety of pathogen antigens. Its function is as follows. On DCs it is a high affinity receptor for ICAM2 and ICAM3 by binding to mannose-like carbohydrates. May act as a DC rolling receptor that mediates transendothelial migration of DC presursors from blood to tissues by binding endothelial ICAM2. Seems to regulate DC-induced T-cell proliferation by binding to ICAM3 on T-cells in the immunological synapse formed between DC and T-cells. This Papio hamadryas (Hamadryas baboon) protein is CD209 antigen (CD209).